Reading from the N-terminus, the 320-residue chain is Lipoyl synthase (320 aa).

The interval 1 to 28 (MVTVVDRVTDRRLRHPEKAHRPDTSVQK) is disordered. Residues 19–28 (AHRPDTSVQK) are compositionally biased toward basic and acidic residues. [4Fe-4S] cluster contacts are provided by cysteine 59, cysteine 64, cysteine 70, cysteine 85, cysteine 89, cysteine 92, and serine 298. A Radical SAM core domain is found at 71-287 (WSQRHASFMI…AKIGKVKGFL (217 aa)).

This sequence belongs to the radical SAM superfamily. Lipoyl synthase family. [4Fe-4S] cluster serves as cofactor.

It localises to the cytoplasm. It catalyses the reaction [[Fe-S] cluster scaffold protein carrying a second [4Fe-4S](2+) cluster] + N(6)-octanoyl-L-lysyl-[protein] + 2 oxidized [2Fe-2S]-[ferredoxin] + 2 S-adenosyl-L-methionine + 4 H(+) = [[Fe-S] cluster scaffold protein] + N(6)-[(R)-dihydrolipoyl]-L-lysyl-[protein] + 4 Fe(3+) + 2 hydrogen sulfide + 2 5'-deoxyadenosine + 2 L-methionine + 2 reduced [2Fe-2S]-[ferredoxin]. The protein operates within protein modification; protein lipoylation via endogenous pathway; protein N(6)-(lipoyl)lysine from octanoyl-[acyl-carrier-protein]: step 2/2. Catalyzes the radical-mediated insertion of two sulfur atoms into the C-6 and C-8 positions of the octanoyl moiety bound to the lipoyl domains of lipoate-dependent enzymes, thereby converting the octanoylated domains into lipoylated derivatives. The chain is Lipoyl synthase from Bartonella henselae (strain ATCC 49882 / DSM 28221 / CCUG 30454 / Houston 1) (Rochalimaea henselae).